We begin with the raw amino-acid sequence, 261 residues long: Mite allergen Der p 3 (261 aa).

A signal peptide spans 1 to 18 (MIIYNILIVLLLAINTLA). Positions 19 to 29 (NPILPASPNAT) are excised as a propeptide. Positions 30 to 260 (IVGGEKALAG…FIDWIESKRS (231 aa)) constitute a Peptidase S1 domain. An intrachain disulfide couples Cys-54 to Cys-70. Active-site charge relay system residues include His-69 and Asp-114. Intrachain disulfides connect Cys-181/Cys-198 and Cys-210/Cys-236. Catalysis depends on Ser-214, which acts as the Charge relay system.

It belongs to the peptidase S1 family.

Its subcellular location is the secreted. The protein is Mite allergen Der p 3 (DERP3) of Dermatophagoides pteronyssinus (European house dust mite).